The following is a 109-amino-acid chain: MQQFEWIHAAWLAFAIVLEIIANVFLKFSDGFRRKWFGLLSIAAVLGAFSALSQAVKGIDLSVAYALWGGFGIAATLAAGWVLFGQRLNRKGWIGLVLLLAGMVMIKLA.

4 helical membrane-spanning segments follow: residues 6 to 26 (WIHAAWLAFAIVLEIIANVFL), 36 to 56 (WFGLLSIAAVLGAFSALSQAV), 64 to 84 (AYALWGGFGIAATLAAGWVLF), and 88 to 108 (LNRKGWIGLVLLLAGMVMIKL).

The protein belongs to the drug/metabolite transporter (DMT) superfamily. Small multidrug resistance (SMR) (TC 2.A.7.1) family. MdtI subfamily. Forms a complex with MdtJ.

It localises to the cell inner membrane. Catalyzes the excretion of spermidine. The chain is Spermidine export protein MdtI from Enterobacter sp. (strain 638).